A 660-amino-acid polypeptide reads, in one-letter code: Bifunctional polymyxin resistance protein ArnA (660 aa).

The formyltransferase ArnAFT stretch occupies residues 1–304; it reads MKTVVFAYHD…TLGLVQGSRL (304 aa). 86-88 serves as a coordination point for (6R)-10-formyltetrahydrofolate; that stretch reads HLI. Residue H104 is the Proton donor; for formyltransferase activity of the active site. (6R)-10-formyltetrahydrofolate is bound by residues R114 and 136–140; that span reads VKRAD. The interval 314–660 is dehydrogenase ArnADH; that stretch reads RRTRVLILGV…RTVDLTDKPS (347 aa). NAD(+) contacts are provided by residues D347 and 368-369; that span reads DI. Residues A393, Y398, and 432–433 contribute to the UDP-alpha-D-glucuronate site; that span reads TS. E434 serves as the catalytic Proton acceptor; for decarboxylase activity. UDP-alpha-D-glucuronate-binding positions include R460, N492, 526-535, and Y613; that span reads KLIDGGKQKR. R619 acts as the Proton donor; for decarboxylase activity in catalysis.

The protein in the N-terminal section; belongs to the Fmt family. UDP-L-Ara4N formyltransferase subfamily. This sequence in the C-terminal section; belongs to the NAD(P)-dependent epimerase/dehydratase family. UDP-glucuronic acid decarboxylase subfamily. As to quaternary structure, homohexamer, formed by a dimer of trimers.

It carries out the reaction UDP-alpha-D-glucuronate + NAD(+) = UDP-beta-L-threo-pentopyranos-4-ulose + CO2 + NADH. The catalysed reaction is UDP-4-amino-4-deoxy-beta-L-arabinose + (6R)-10-formyltetrahydrofolate = UDP-4-deoxy-4-formamido-beta-L-arabinose + (6S)-5,6,7,8-tetrahydrofolate + H(+). Its pathway is nucleotide-sugar biosynthesis; UDP-4-deoxy-4-formamido-beta-L-arabinose biosynthesis; UDP-4-deoxy-4-formamido-beta-L-arabinose from UDP-alpha-D-glucuronate: step 1/3. It functions in the pathway nucleotide-sugar biosynthesis; UDP-4-deoxy-4-formamido-beta-L-arabinose biosynthesis; UDP-4-deoxy-4-formamido-beta-L-arabinose from UDP-alpha-D-glucuronate: step 3/3. The protein operates within bacterial outer membrane biogenesis; lipopolysaccharide biosynthesis. Bifunctional enzyme that catalyzes the oxidative decarboxylation of UDP-glucuronic acid (UDP-GlcUA) to UDP-4-keto-arabinose (UDP-Ara4O) and the addition of a formyl group to UDP-4-amino-4-deoxy-L-arabinose (UDP-L-Ara4N) to form UDP-L-4-formamido-arabinose (UDP-L-Ara4FN). The modified arabinose is attached to lipid A and is required for resistance to polymyxin and cationic antimicrobial peptides. The chain is Bifunctional polymyxin resistance protein ArnA from Escherichia coli O6:H1 (strain CFT073 / ATCC 700928 / UPEC).